The following is a 190-amino-acid chain: Threonylcarbamoyl-AMP synthase (190 aa).

Residues 7–190 (ADAISFIVDV…ALTGELFRQG (184 aa)) enclose the YrdC-like domain.

The protein belongs to the SUA5 family. TsaC subfamily.

Its subcellular location is the cytoplasm. The catalysed reaction is L-threonine + hydrogencarbonate + ATP = L-threonylcarbamoyladenylate + diphosphate + H2O. Its function is as follows. Required for the formation of a threonylcarbamoyl group on adenosine at position 37 (t(6)A37) in tRNAs that read codons beginning with adenine. Catalyzes the conversion of L-threonine, HCO(3)(-)/CO(2) and ATP to give threonylcarbamoyl-AMP (TC-AMP) as the acyladenylate intermediate, with the release of diphosphate. This Cronobacter sakazakii (strain ATCC BAA-894) (Enterobacter sakazakii) protein is Threonylcarbamoyl-AMP synthase.